A 226-amino-acid chain; its full sequence is Histone H1.5 (226 aa).

The segment covering 1–16 has biased composition (low complexity); it reads MSETAPAETATPAPVE. The disordered stretch occupies residues 1-44; the sequence is MSETAPAETATPAPVEKSPAKKKATKKAAGAGAAKRKATGPPVS. The residue at position 2 (S2) is an N-acetylserine; partial. The residue at position 2 (S2) is a Phosphoserine. T11 is subject to Phosphothreonine; by GSK3. K17 bears the N6-acetyllysine mark. S18 bears the Phosphoserine mark. N6-methyllysine is present on K27. K37 is subject to N6-(beta-hydroxybutyryl)lysine; alternate. Position 37 is an N6-succinyllysine; alternate (K37). The residue at position 39 (T39) is a Phosphothreonine. Residues 39 to 112 enclose the H15 domain; the sequence is TGPPVSELIT…GASGSFKLNK (74 aa). K49 is modified (N6-acetyllysine). K55 bears the N6-(beta-hydroxybutyryl)lysine mark. A Citrulline modification is found at R57. K67 is modified (N6-(beta-hydroxybutyryl)lysine). K78 is subject to N6-acetyllysine. Residues K88, K93, and K109 each carry the N6-(beta-hydroxybutyryl)lysine modification. The interval 98-226 is disordered; the sequence is QTKGTGASGS…KAKKAAAKKK (129 aa). The span at 122-133 shows a compositional bias: basic residues; the sequence is KAKKAGAAKAKK. Phosphothreonine occurs at positions 138 and 155. Residues 140-161 show a composition bias toward basic residues; that stretch reads KKAKKAAGAKKAVKKTPKKAKK. The residue at position 168 (K168) is an N6-acetyllysine. The span at 169–187 shows a compositional bias: basic residues; sequence KVAKSPKKAKAAAKPKKAT. S173 and S189 each carry phosphoserine. Basic residues predominate over residues 194–226; it reads KAVKPKAAKPKAAKPKAAKPKAAKAKKAAAKKK.

Belongs to the histone H1/H5 family. As to quaternary structure, interacts with MSX1. H1 histones are progressively phosphorylated during the cell cycle, becoming maximally phosphorylated during late G2 phase and M phase, and being dephosphorylated sharply thereafter. Phosphorylated at Thr-11 by GSK3B during mitosis in prometaphase and dephosphorylated in telophase. In terms of processing, citrullination at Arg-57 (H1R54ci) by PADI4 takes place within the DNA-binding site of H1 and results in its displacement from chromatin and global chromatin decondensation, thereby promoting pluripotency and stem cell maintenance. Ubiquitous. Expressed in the majority of the cell lines tested and in testis.

The protein localises to the nucleus. Its subcellular location is the chromosome. Functionally, histone H1 protein binds to linker DNA between nucleosomes forming the macromolecular structure known as the chromatin fiber. Histones H1 are necessary for the condensation of nucleosome chains into higher-order structured fibers. Also acts as a regulator of individual gene transcription through chromatin remodeling, nucleosome spacing and DNA methylation. The chain is Histone H1.5 from Homo sapiens (Human).